The chain runs to 415 residues: ATP-dependent RNA helicase RhlB (415 aa).

The Q motif motif lies at 9 to 37; that stretch reads QRFSALPLHPIVRGALAKKGFDFCTPIQA. In terms of domain architecture, Helicase ATP-binding spans 40 to 218; the sequence is LPISLNGRDV…FEDMNEPEYI (179 aa). 53 to 60 provides a ligand contact to ATP; that stretch reads AQTGTGKT. Residues 164 to 167 carry the DEAD box motif; sequence DEAD. The Helicase C-terminal domain maps to 241 to 389; the sequence is DKMALLLTLM…VSQYETEALL (149 aa).

The protein belongs to the DEAD box helicase family. RhlB subfamily. In terms of assembly, component of the RNA degradosome, which is a multiprotein complex involved in RNA processing and mRNA degradation.

It localises to the cytoplasm. It catalyses the reaction ATP + H2O = ADP + phosphate + H(+). Functionally, DEAD-box RNA helicase involved in RNA degradation. Has RNA-dependent ATPase activity and unwinds double-stranded RNA. The sequence is that of ATP-dependent RNA helicase RhlB from Haemophilus influenzae (strain ATCC 51907 / DSM 11121 / KW20 / Rd).